Consider the following 235-residue polypeptide: Serine protease SplA (235 aa).

The first 35 residues, 1–35 (MNKNVMVKGLTALTILTSLGFAENISNQPHSIAKA), serve as a signal peptide directing secretion. Active-site charge relay system residues include histidine 74, aspartate 113, and serine 189.

This sequence belongs to the peptidase S1B family.

It is found in the secreted. In Staphylococcus aureus (strain Mu3 / ATCC 700698), this protein is Serine protease SplA (splA).